Here is a 397-residue protein sequence, read N- to C-terminus: Riboflavin biosynthesis protein RibBA (397 aa).

A DHBP synthase region spans residues 1 to 199 (MFHRIEEALE…IEDLIAYRRH (199 aa)). Residues 26–27 (RE), Asp-31, 138–142 (RAGHT), and Glu-162 each bind D-ribulose 5-phosphate. Glu-27 lines the Mg(2+) pocket. Mg(2+) is bound at residue His-141. Positions 200-397 (HETLVTREVE…VNKLGHLLNL (198 aa)) are GTP cyclohydrolase II. Residue 250–254 (RVHSE) coordinates GTP. Zn(2+)-binding residues include Cys-255, Cys-266, and Cys-268. Residues Gln-271, 293–295 (EGR), and Thr-315 each bind GTP. Residue Asp-327 is the Proton acceptor; for GTP cyclohydrolase activity of the active site. Arg-329 serves as the catalytic Nucleophile; for GTP cyclohydrolase activity. Positions 350 and 355 each coordinate GTP.

The protein in the N-terminal section; belongs to the DHBP synthase family. It in the C-terminal section; belongs to the GTP cyclohydrolase II family. Requires Mg(2+) as cofactor. The cofactor is Mn(2+). Zn(2+) serves as cofactor.

It carries out the reaction D-ribulose 5-phosphate = (2S)-2-hydroxy-3-oxobutyl phosphate + formate + H(+). The catalysed reaction is GTP + 4 H2O = 2,5-diamino-6-hydroxy-4-(5-phosphoribosylamino)-pyrimidine + formate + 2 phosphate + 3 H(+). It functions in the pathway cofactor biosynthesis; riboflavin biosynthesis; 2-hydroxy-3-oxobutyl phosphate from D-ribulose 5-phosphate: step 1/1. The protein operates within cofactor biosynthesis; riboflavin biosynthesis; 5-amino-6-(D-ribitylamino)uracil from GTP: step 1/4. In terms of biological role, catalyzes the conversion of D-ribulose 5-phosphate to formate and 3,4-dihydroxy-2-butanone 4-phosphate. Functionally, catalyzes the conversion of GTP to 2,5-diamino-6-ribosylamino-4(3H)-pyrimidinone 5'-phosphate (DARP), formate and pyrophosphate. The chain is Riboflavin biosynthesis protein RibBA from Bacillus cereus (strain G9842).